A 746-amino-acid chain; its full sequence is MVLQARSKHRDAAPRPPRPARSSPPPLNGASEVAARELGPERAPPSPGRRSTASRKGPRAETAAPAPDGLAGRLAAGLHWALGLRRGRGRTWSTLLLASFAALLHWSHITQLFENDRHFSHLSTLEREMAFRTEMGLYYSYFKTIVEAPSFLSGVWMIMNDRLTEYPLVINTLKRFNLYPEVILASWYRIYTKIMDLIGIQTKICWTVTRGEGLSPIESCEGLGDPACFYVAVIFMLNGLMMALFFIYGTYLSGSRLGGLVTVLCFFFNHGECTRVMWTPPLRESFSYPFLVLQMLLVTHILRTTQLYRGSLIALCISNVFFMLPWQFAQFVLLTQIASLFAVYVVGYIDTYKLQKIIYTHMISLVLCFVLMFGNSMLLTSYYASSLVIIWGMLAMKPQFLKMNVSELSLWVIQGCCWLFGTVTLKSLTSRIFGIADDAHIGNLLTSKFFSYKDFDTLLYTCAAEFDFMEKETPLRYTKTLLLPVVLAIVAAIGRKIINDMRGVIANQETDVRKHQVDHGELVYHALQLFAYTALGILIMRLKLFLTPHMCVMASLICSRQLFGWLFGKVHPGAVVFAVLAAMSIQGSANLQTQWNIVGEFSNLPQEELIEWIRHSTKPDAVFAGAMPTMASVKLSALRPVVNHPHYEDAGLRARTKIVYSMYSRKAPEDVKKELIKLKVNYYILEESWCIRRSKPGCSMPEIWDVEDPDNAGKTPLCNILVKDSKPHFTTVFQNSVYKVLEVIRQ.

The segment at 1–68 (MVLQARSKHR…RAETAAPAPD (68 aa)) is disordered. Positions 14-27 (PRPPRPARSSPPPL) are enriched in pro residues. 12 helical membrane passes run 93–113 (STLLLASFAALLHWSHITQLF), 139–159 (YSYFKTIVEAPSFLSGVWMIM), 227–247 (ACFYVAVIFMLNGLMMALFFI), 248–268 (YGTYLSGSRLGGLVTVLCFFF), 308–328 (YRGSLIALCISNVFFMLPWQF), 329–349 (AQFVLLTQIASLFAVYVVGYI), 357–377 (IIYTHMISLVLCFVLMFGNSM), 378–398 (LLTSYYASSLVIIWGMLAMKP), 405–425 (VSELSLWVIQGCCWLFGTVTL), 481–501 (LLLPVVLAIVAAIGRKIINDM), 520–540 (GELVYHALQLFAYTALGILIM), and 562–582 (LFGWLFGKVHPGAVVFAVLAA).

It belongs to the dpy-19 family.

It is found in the endoplasmic reticulum membrane. It catalyses the reaction L-tryptophyl-[protein] + a di-trans,poly-cis-dolichyl beta-D-mannosyl phosphate = C-alpha-D-mannosyl-L-tryptophyl-[protein] + a di-trans,poly-cis-dolichyl phosphate + H(+). It participates in protein modification; protein glycosylation. Functionally, C-mannosyltransferase that mediates the C-mannosylation tryptophan residues on target proteins. The reaction occurs on the luminal side of the endoplasmic reticulum and involves the transfer of a mannose unit from a dolichylphosphate mannose (Dol-P-Man) donor to an acceptor protein containing a WxxW consensus sequence. C-mannosylates the first two tryptophans in the WxxWxxWxxC sequence motif in thrombospondin (TSP) type-1 repeats of UNC5A. Regulates neurite extension during development. The sequence is that of Protein C-mannosyl-transferase DPY19L1 (Dpy19l1) from Rattus norvegicus (Rat).